Reading from the N-terminus, the 293-residue chain is 3-hydroxybutyrate-oligomer hydrolase (293 aa).

It belongs to the AB hydrolase superfamily.

Its subcellular location is the cytoplasm. It catalyses the reaction (3R)-hydroxybutanoate pentamer + H2O = (3R)-hydroxybutanoate tetramer + (R)-3-hydroxybutanoate + H(+). The enzyme catalyses (3R)-hydroxybutanoate tetramer + H2O = (3R)-hydroxybutanoate trimer + (R)-3-hydroxybutanoate + H(+). It carries out the reaction (3R)-hydroxybutanoate trimer + H2O = (3R)-hydroxybutanoate dimer + (R)-3-hydroxybutanoate + H(+). The catalysed reaction is (3R)-hydroxybutanoate dimer + H2O = 2 (R)-3-hydroxybutanoate + H(+). It catalyses the reaction [(3R)-hydroxybutanoate](n) + H2O = [(3R)-hydroxybutanoate](n-1) + (R)-3-hydroxybutanoate + H(+). Its function is as follows. Catalyzes the degradation of various 3-hydroxybutyrate (3HB) oligomers at a high specific activity and artificial amorphous poly(3-hydroxybutyrate) (PHB) at a lower specific activity. Hydrolyzes the 3HB pentamer most efficiently than the tetramer, trimer and dimer. Does not hydrolyze native PHB granules and semicrystalline PHB. Participates in the mobilization of PHB along with other hydrolases. This is 3-hydroxybutyrate-oligomer hydrolase from Cupriavidus necator (strain ATCC 17699 / DSM 428 / KCTC 22496 / NCIMB 10442 / H16 / Stanier 337) (Ralstonia eutropha).